The sequence spans 408 residues: Aspartate aminotransferase (408 aa).

The L-aspartate site is built by G45, W134, and N184. Position 247 is an N6-(pyridoxal phosphate)lysine (K247). L-aspartate is bound at residue R382.

The protein belongs to the class-I pyridoxal-phosphate-dependent aminotransferase family. In terms of assembly, homodimer. Pyridoxal 5'-phosphate serves as cofactor.

The protein localises to the cytoplasm. It carries out the reaction L-aspartate + 2-oxoglutarate = oxaloacetate + L-glutamate. Its function is as follows. Catalyzes the reversible conversion of aspartate and 2-oxoglutarate to glutamate and oxaloacetate. Does not have prephenate aminotransferase activity. The chain is Aspartate aminotransferase from Streptomyces avermitilis (strain ATCC 31267 / DSM 46492 / JCM 5070 / NBRC 14893 / NCIMB 12804 / NRRL 8165 / MA-4680).